Here is a 141-residue protein sequence, read N- to C-terminus: Hemoglobin subunit alpha (141 aa).

In terms of domain architecture, Globin spans V1–R141. S3 is modified (phosphoserine). At K7 the chain carries N6-succinyllysine. T8 carries the post-translational modification Phosphothreonine. K11 carries the post-translational modification N6-succinyllysine. Residue K16 is modified to N6-acetyllysine; alternate. At K16 the chain carries N6-succinyllysine; alternate. The residue at position 24 (Y24) is a Phosphotyrosine. K40 is subject to N6-succinyllysine. Residue S49 is modified to Phosphoserine. H58 lines the O2 pocket. H87 contacts heme b. Position 102 is a phosphoserine (S102). T108 bears the Phosphothreonine mark. Position 124 is a phosphoserine (S124). Residues T134 and T137 each carry the phosphothreonine modification. S138 bears the Phosphoserine mark.

Belongs to the globin family. Heterotetramer of two alpha chains and two beta chains. In terms of tissue distribution, red blood cells.

Involved in oxygen transport from the lung to the various peripheral tissues. Functionally, hemopressin acts as an antagonist peptide of the cannabinoid receptor CNR1. Hemopressin-binding efficiently blocks cannabinoid receptor CNR1 and subsequent signaling. The protein is Hemoglobin subunit alpha (HBA) of Phoca vitulina (Harbor seal).